The chain runs to 1189 residues: Phosphinothricin tripeptide synthetase PhsB (1189 aa).

One can recognise a Carrier 1 domain in the interval 5-80; it reads QTDDVVTGRI…ALAKRIRASR (76 aa). Serine 40 is subject to O-(pantetheine 4'-phosphoryl)serine. Disordered stretches follow at residues 75–97 and 454–476; these read RIRA…PVDS and TPDR…GGDT. The segment at 100–541 is condensation; it reads TAPLTFQQEP…VALLPLQEPA (442 aa). Residues 455-472 are compositionally biased toward basic and acidic residues; it reads PDRDGREPGEGPFAREES. Residues 572 to 969 are adenylation; it reads AQAHRTPDAV…GREDGQVKLR (398 aa). The segment at 1045-1081 is disordered; the sequence is DRVPLTPSGKTDRKALPDPAAGEQPRSGRGAAPGTPA. The Carrier 2 domain maps to 1076-1151; that stretch reads APGTPAEREL…DFALAVVTAQ (76 aa). An O-(pantetheine 4'-phosphoryl)serine modification is found at serine 1111.

It belongs to the NRP synthetase family. Pantetheine 4'-phosphate is required as a cofactor.

It carries out the reaction holo-[peptidyl-carrier protein] + L-alanine + ATP = L-alanyl-[peptidyl-carrier protein] + AMP + diphosphate. The protein operates within secondary metabolite biosynthesis; bialaphos biosynthesis. In terms of biological role, involved in the biosynthesis of phosphinothricin tripeptide (PTT), also known as bialaphos (BA), a natural-product antibiotic and potent herbicide. Adenylates L-alanine and loads it onto a peptidyl carrier domain via a thioester linkage to the phosphopanthetheine moiety. Shows weaker activity with aminobutyric acid and L-serine. The sequence is that of Phosphinothricin tripeptide synthetase PhsB from Streptomyces viridochromogenes (strain DSM 40736 / JCM 4977 / BCRC 1201 / Tue 494).